Here is a 129-residue protein sequence, read N- to C-terminus: Insulin-like growth factor 2 (129 aa).

Positions 1-24 (MGVPMGKSLLAPLTFLALASCCFA) are cleaved as a signal peptide. The interval 25–52 (AYRPSETLCGGELVDTLQFVCGDRGFYF) is b. 3 disulfide bridges follow: C33-C72, C45-C85, and C71-C76. The c stretch occupies residues 53-65 (SRPASRVSRRSSR). The a stretch occupies residues 66 to 86 (GIVEECCFRSCDLALLETYCA). Positions 87-92 (TPAKSE) are d. Residues 93 to 129 (RDVSTPPTVLPDNFPRYPVGKFFQYDTWKQSAQRLRR) constitute a propeptide, e peptide.

Belongs to the insulin family. Interacts with MYORG; this interaction is required for IGF2 secretion. Interacts with integrins ITGAV:ITGB3 and ITGA6:ITGB4; integrin-binding is required for IGF2 signaling. Proteolytically processed by PCSK4, proIGF2 is cleaved at Arg-129 and Arg-92 to generate big-IGF2 and mature IGF2.

The protein localises to the secreted. The insulin-like growth factors possess growth-promoting activity. Major fetal growth hormone in mammals. Plays a key role in regulating fetoplacental development. IGF2 is influenced by placental lactogen. Also involved in tissue differentiation. In adults, involved in glucose metabolism in adipose tissue, skeletal muscle and liver. Acts as a ligand for integrin which is required for IGF2 signaling. Positively regulates myogenic transcription factor MYOD1 function by facilitating the recruitment of transcriptional coactivators, thereby controlling muscle terminal differentiation. Inhibits myoblast differentiation and modulates metabolism via increasing the mitochondrial respiration rate. Its function is as follows. Preptin undergoes glucose-mediated co-secretion with insulin, and acts as a physiological amplifier of glucose-mediated insulin secretion. Exhibits osteogenic properties by increasing osteoblast mitogenic activity through phosphoactivation of MAPK1 and MAPK3. The polypeptide is Insulin-like growth factor 2 (Neovison vison (American mink)).